The following is a 295-amino-acid chain: Nucleotide-binding protein LACR_1047 (295 aa).

Residue 12–19 coordinates ATP; that stretch reads GMSGAGKT. A GTP-binding site is contributed by 63–66; sequence DMRS.

Belongs to the RapZ-like family.

Displays ATPase and GTPase activities. This is Nucleotide-binding protein LACR_1047 from Lactococcus lactis subsp. cremoris (strain SK11).